The sequence spans 228 residues: NADH-quinone oxidoreductase subunit C (228 aa).

It belongs to the complex I 30 kDa subunit family. NDH-1 is composed of 14 different subunits. Subunits NuoB, C, D, E, F, and G constitute the peripheral sector of the complex.

It localises to the cell membrane. It carries out the reaction a quinone + NADH + 5 H(+)(in) = a quinol + NAD(+) + 4 H(+)(out). In terms of biological role, NDH-1 shuttles electrons from NADH, via FMN and iron-sulfur (Fe-S) centers, to quinones in the respiratory chain. The immediate electron acceptor for the enzyme in this species is believed to be a menaquinone. Couples the redox reaction to proton translocation (for every two electrons transferred, four hydrogen ions are translocated across the cytoplasmic membrane), and thus conserves the redox energy in a proton gradient. The sequence is that of NADH-quinone oxidoreductase subunit C from Mycobacteroides abscessus (strain ATCC 19977 / DSM 44196 / CCUG 20993 / CIP 104536 / JCM 13569 / NCTC 13031 / TMC 1543 / L948) (Mycobacterium abscessus).